The primary structure comprises 607 residues: MTEAFDSGAFLSTVSGRPGVYRMFDSDARLLYVGKAKSLKKRLASYFRKTGLAPKTAALVGRIAQVETTITSNETEALLLEQTLIKEWRPPYNILLRDDKSYPYVFLSDGQFPRLSIHRGAKKAKGKYFGPYPSAGAIRESLSLLQKTFFVRQCEDSYYKNRTRPCLQYQIKRCKAPCVGLVEPEVYAEDVRHSVMFLEGRSHALTNELSTAMEEAAINLEFERAAELRDQIALLRRVQDQQSMEGGTGDIDVIAAFVNPGGACVHLISVRGGRVLGSKNFFPQVGIEEEVAEVMAAFLGQYFISSPERDLPSELIVNVVHEDFPALIEAIQALRGRELSISHRVRGTRARWQQLAVTNAEQALGARLANRQHVAARFEALAEVLNLDEPPQRLECYDISHSSGEATVASCVVFGPEGAIKSDYRRYNIEGVTAGDDYAAMHQALTRRFSKLKEGEGKLPDILLVDGGKGQLSMARDVLNELAVPDLILLGVAKGATRKAGFETLYLNDAANEFTLRGDSPALHLIQQIRDEAHRFAITGHRARRGKTRRTSTLEGVAGVGPTRRRDLLKHFGGLQELSRASIEEIAKAPGISKKLAESIYANLHSE.

Positions 16 to 94 (GRPGVYRMFD…IKEWRPPYNI (79 aa)) constitute a GIY-YIG domain. The UVR domain maps to 203-238 (HALTNELSTAMEEAAINLEFERAAELRDQIALLRRV).

Belongs to the UvrC family. In terms of assembly, interacts with UvrB in an incision complex.

The protein localises to the cytoplasm. In terms of biological role, the UvrABC repair system catalyzes the recognition and processing of DNA lesions. UvrC both incises the 5' and 3' sides of the lesion. The N-terminal half is responsible for the 3' incision and the C-terminal half is responsible for the 5' incision. The protein is UvrABC system protein C of Pseudomonas fluorescens (strain Pf0-1).